A 1085-amino-acid chain; its full sequence is Carbamoyl phosphate synthase large chain (1085 aa).

The carboxyphosphate synthetic domain stretch occupies residues 1–399; that stretch reads MPKRTDISNI…ALQKALCSLE (399 aa). ATP-binding residues include Arg-127, Arg-167, Gly-174, Glu-206, Leu-208, Glu-213, Gly-239, Val-240, His-241, Gln-283, and Glu-297. The region spanning 131–326 is the ATP-grasp 1 domain; sequence KEAMLKIGMD…IAKVATMLAV (196 aa). Residues Gln-283, Glu-297, and Asn-299 each coordinate Mg(2+). Positions 283, 297, and 299 each coordinate Mn(2+). The segment at 400–552 is oligomerization domain; it reads NNWLGFESLS…APNPLPPIEN (153 aa). Positions 553–951 are carbamoyl phosphate synthetic domain; it reads KQEKKEKKIL…AFFKAQTACF (399 aa). The 194-residue stretch at 678 to 871 folds into the ATP-grasp 2 domain; the sequence is SLFLKELDIK…LAKVATRVMV (194 aa). ATP contacts are provided by Arg-714, Lys-756, Leu-758, Glu-763, Gly-788, Ile-789, His-790, Ser-791, Gln-830, and Glu-842. Residues Gln-830, Glu-842, and Asn-844 each coordinate Mg(2+). Residues Gln-830, Glu-842, and Asn-844 each coordinate Mn(2+). In terms of domain architecture, MGS-like spans 952–1085; the sequence is NPIKNKGLIF…ELLALQDYLK (134 aa). Residues 952–1085 are allosteric domain; that stretch reads NPIKNKGLIF…ELLALQDYLK (134 aa).

It belongs to the CarB family. In terms of assembly, composed of two chains; the small (or glutamine) chain promotes the hydrolysis of glutamine to ammonia, which is used by the large (or ammonia) chain to synthesize carbamoyl phosphate. Tetramer of heterodimers (alpha,beta)4. Requires Mg(2+) as cofactor. Mn(2+) serves as cofactor.

The catalysed reaction is hydrogencarbonate + L-glutamine + 2 ATP + H2O = carbamoyl phosphate + L-glutamate + 2 ADP + phosphate + 2 H(+). It carries out the reaction hydrogencarbonate + NH4(+) + 2 ATP = carbamoyl phosphate + 2 ADP + phosphate + 2 H(+). The protein operates within amino-acid biosynthesis; L-arginine biosynthesis; carbamoyl phosphate from bicarbonate: step 1/1. It participates in pyrimidine metabolism; UMP biosynthesis via de novo pathway; (S)-dihydroorotate from bicarbonate: step 1/3. Large subunit of the glutamine-dependent carbamoyl phosphate synthetase (CPSase). CPSase catalyzes the formation of carbamoyl phosphate from the ammonia moiety of glutamine, carbonate, and phosphate donated by ATP, constituting the first step of 2 biosynthetic pathways, one leading to arginine and/or urea and the other to pyrimidine nucleotides. The large subunit (synthetase) binds the substrates ammonia (free or transferred from glutamine from the small subunit), hydrogencarbonate and ATP and carries out an ATP-coupled ligase reaction, activating hydrogencarbonate by forming carboxy phosphate which reacts with ammonia to form carbamoyl phosphate. This Helicobacter pylori (strain ATCC 700392 / 26695) (Campylobacter pylori) protein is Carbamoyl phosphate synthase large chain.